Here is an 875-residue protein sequence, read N- to C-terminus: Alanine--tRNA ligase (875 aa).

Residues His-564, His-568, Cys-666, and His-670 each coordinate Zn(2+).

Belongs to the class-II aminoacyl-tRNA synthetase family. In terms of assembly, homotetramer. The cofactor is Zn(2+).

The protein localises to the cytoplasm. It catalyses the reaction tRNA(Ala) + L-alanine + ATP = L-alanyl-tRNA(Ala) + AMP + diphosphate. Functionally, catalyzes the attachment of alanine to tRNA(Ala) in a two-step reaction: alanine is first activated by ATP to form Ala-AMP and then transferred to the acceptor end of tRNA(Ala). Also edits incorrectly charged Ser-tRNA(Ala) and Gly-tRNA(Ala) via its editing domain. This Yersinia enterocolitica serotype O:8 / biotype 1B (strain NCTC 13174 / 8081) protein is Alanine--tRNA ligase.